We begin with the raw amino-acid sequence, 75 residues long: Large ribosomal subunit protein bL31 (75 aa).

Cysteine 16, cysteine 18, cysteine 37, and cysteine 40 together coordinate Zn(2+).

Belongs to the bacterial ribosomal protein bL31 family. Type A subfamily. In terms of assembly, part of the 50S ribosomal subunit. Zn(2+) serves as cofactor.

Its function is as follows. Binds the 23S rRNA. This is Large ribosomal subunit protein bL31 from Legionella pneumophila (strain Paris).